The sequence spans 156 residues: Large ribosomal subunit protein uL15 (156 aa).

The disordered stretch occupies residues 29–48; sequence CGKGKTSGRGHKGQKARSGV. Positions 34 to 43 are enriched in basic residues; sequence TSGRGHKGQK.

This sequence belongs to the universal ribosomal protein uL15 family. As to quaternary structure, part of the 50S ribosomal subunit.

In terms of biological role, binds to the 23S rRNA. The chain is Large ribosomal subunit protein uL15 from Ehrlichia chaffeensis (strain ATCC CRL-10679 / Arkansas).